A 414-amino-acid polypeptide reads, in one-letter code: MTQANLSETLFKPRFKHPETSTLVRRFSHGAQLPVQSALDGKTIPHWYRMINRLMWIWRGIDPREILDVQARIVMSDAERTDDDLYDTVIGYRGGNWIYEWATQAMVWQQKACAEEDPQLSGRHWLHAATLYNIAAYPHLKGDDLAEQAQALSNRAYEEAAQRLPGTMRQMEFTVPGGAPITGFLHMPKGDGPFPTVLMCGGLDAMQTDYYSLYERYFAPRGIAMLTIDMPSVGFSSKWKLTQDSSLLHQHVLKALPNVPWVDHTRVAAFGFRFGANVAVRLAYLESPRLKAVACLGPVVHTLLSDFKCQQQVPEMYLDVLASRLGMHDASDEALRVELNRYSLKVQGLLGRRCPTPMLSGYWKNDPFSPEEDSRLITSSSADGKLLEIPFNPVYRNFDKGLQEITDWIEKRLC.

The protein belongs to the FrsA family.

The catalysed reaction is a carboxylic ester + H2O = an alcohol + a carboxylate + H(+). Its function is as follows. Catalyzes the hydrolysis of esters. The protein is Esterase FrsA of Escherichia coli O127:H6 (strain E2348/69 / EPEC).